Reading from the N-terminus, the 476-residue chain is Protein transport protein Sec61 subunit alpha (476 aa).

The Cytoplasmic segment spans residues 2–33 (GIKFLEFIKPFCAVLPEIQKPERKIQFREKVL). A helical membrane pass occupies residues 34–53 (WTAITLFIFLVCCQIPLFGI). Topologically, residues 54-76 (MSSDSADPFYWMRVILASNRGTL) are lumenal. Residues 77 to 96 (MELGIAPIVTSGLIMQLLAG) traverse the membrane as a helical segment. Topologically, residues 97-117 (AKIIEVGDTPKDRALFNGAQK) are cytoplasmic. Residues 118–138 (LFGMIITIGQAIVYVMTGMYG) traverse the membrane as a helical segment. The Lumenal segment spans residues 139-144 (DPSEMG). The chain crosses the membrane as a helical span at residues 145-165 (AGICLLIIIQLFVAGLIVLLL). Topologically, residues 166 to 172 (DELLQKG) are cytoplasmic. The chain crosses the membrane as a helical span at residues 173–193 (YGLGSGISLFIATNICETIVW). Over 194 to 240 (KAFGPTTVNTGRGTEFEGAIIALFHLLATRTDKVRALREAFYRQNLP) the chain is Lumenal. The helical transmembrane segment at 241–261 (NLMNLIATVFVFAVVIYFQGF) threads the bilayer. At 262 to 288 (RVDLPIKSARYRGQYNTYPIKLFYTSN) the chain is on the cytoplasmic side. Residues 289–309 (IPIILQSALVSNLYVISQMLS) form a helical membrane-spanning segment. Residues 310–354 (TRFSGNFLVNLLGTWSDATTSGPARAYPVAGLCYYLSPPESFGSV) are Lumenal-facing. A helical membrane pass occupies residues 355 to 375 (LDDPVHAVIYIVFMLGSCAFF). Residues 376 to 420 (SKTWIEVSGSSAKDVAKQLKEQQMVMRGHRETSMVHELNRYIPTA) are Cytoplasmic-facing. A helical membrane pass occupies residues 421–441 (AAFGGLCIGGLSVMADFLGAI). The Lumenal portion of the chain corresponds to 442-445 (GSGT). The helical transmembrane segment at 446–462 (GILLAVTIIYQYFEIFV) threads the bilayer. Residues 463 to 476 (KEQSEVGSMGALLF) are Cytoplasmic-facing.

It belongs to the SecY/SEC61-alpha family. The SEC61 channel-forming translocon complex consists of channel-forming core components SEC61A1, SEC61B and SEC61G and different auxiliary components such as SEC62 and SEC63. The SEC61 channel associates with the multi-pass translocon (MPT) complex.

The protein localises to the endoplasmic reticulum membrane. In terms of biological role, component of SEC61 channel-forming translocon complex that mediates transport of signal peptide-containing precursor polypeptides across the endoplasmic reticulum (ER). Forms a ribosome receptor and a gated pore in the ER membrane, both functions required for cotranslational translocation of nascent polypeptides. May cooperate with auxiliary protein SEC62, SEC63 and HSPA5/BiP to enable post-translational transport of small presecretory proteins. The SEC61 channel is also involved in ER membrane insertion of transmembrane proteins: it mediates membrane insertion of the first few transmembrane segments of proteins, while insertion of subsequent transmembrane regions of multi-pass membrane proteins is mediated by the multi-pass translocon (MPT) complex. The chain is Protein transport protein Sec61 subunit alpha (sec61a) from Bovichtus variegatus (Thornfish).